The sequence spans 342 residues: Isopentenyl-diphosphate delta-isomerase (342 aa).

11 to 12 (RK) provides a ligand contact to substrate. FMN-binding positions include Ser68, 69–71 (SMT), Ser99, and Asn127. 99 to 101 (SMR) lines the substrate pocket. Residue Gln162 coordinates substrate. Residue Glu163 coordinates Mg(2+). Residues Lys194, Thr224, 274–276 (GLK), and 295–296 (AG) each bind FMN.

Belongs to the IPP isomerase type 2 family. In terms of assembly, homooctamer. Dimer of tetramers. FMN serves as cofactor. It depends on NADPH as a cofactor. Requires Mg(2+) as cofactor.

The protein resides in the cytoplasm. The enzyme catalyses isopentenyl diphosphate = dimethylallyl diphosphate. Functionally, involved in the biosynthesis of isoprenoids. Catalyzes the 1,3-allylic rearrangement of the homoallylic substrate isopentenyl (IPP) to its allylic isomer, dimethylallyl diphosphate (DMAPP). This chain is Isopentenyl-diphosphate delta-isomerase, found in Rickettsia akari (strain Hartford).